Reading from the N-terminus, the 221-residue chain is Oxaloacetate tautomerase oaa1, mitochondrial (221 aa).

Mg(2+) contacts are provided by glutamate 59, glutamate 61, and aspartate 93.

It belongs to the FAH family. The cofactor is Mg(2+). Mn(2+) is required as a cofactor.

It is found in the mitochondrion. The protein localises to the cytoplasm. The catalysed reaction is oxaloacetate = enol-oxaloacetate. Its function is as follows. Tautomerase that converts enol-oxaloacetate, a strong inhibitor of succinate dehydrogenase, to the physiological keto form of oxaloacetate. The sequence is that of Oxaloacetate tautomerase oaa1, mitochondrial from Schizosaccharomyces pombe (strain 972 / ATCC 24843) (Fission yeast).